We begin with the raw amino-acid sequence, 68 residues long: Metallothionein (68 aa).

This sequence belongs to the metallothionein superfamily. Type 4 family.

In terms of biological role, metallothioneins have a high content of cysteine residues that bind various heavy metals. In Lytechinus pictus (Painted sea urchin), this protein is Metallothionein (MT1).